Reading from the N-terminus, the 185-residue chain is Ribosome-recycling factor (185 aa).

The protein belongs to the RRF family.

It localises to the cytoplasm. Responsible for the release of ribosomes from messenger RNA at the termination of protein biosynthesis. May increase the efficiency of translation by recycling ribosomes from one round of translation to another. The chain is Ribosome-recycling factor from Dehalococcoides mccartyi (strain ATCC BAA-2266 / KCTC 15142 / 195) (Dehalococcoides ethenogenes (strain 195)).